The primary structure comprises 472 residues: Nuclear receptor subfamily 0 group B member 1 (472 aa).

3 repeat units span residues 1–67 (MAGE…YRCC), 68–135 (FCGE…YRCC), and 136–202 (FCGE…YRSY). The segment at 1–255 (MAGEDHPWQG…RLITLKDPQV (255 aa)) is 4 X 67 AA tandem repeats. Short sequence motifs (LXXLL motif) lie at residues 13-17 (LYNLL), 80-84 (LYSML), and 148-152 (LYSLL). In terms of domain architecture, NR LBD spans 190-471 (QSTQAMAFLY…DMMLEMLCAK (282 aa)). One copy of the 4; truncated repeat lies at 203-255 (VCGEEQPQQISVASGTPVSADQTPATPQEQPRAPWWDASPGVQRLITLKDPQV). Residues 214-231 (VASGTPVSADQTPATPQE) show a composition bias toward polar residues. Disordered regions lie at residues 214–238 (VASG…APWW) and 324–343 (TTRR…ATEQ). The short motif at 463 to 468 (MMLEML) is the AF-2 motif element.

Belongs to the nuclear hormone receptor family. NR0 subfamily. In terms of assembly, homodimer. Interacts with NR5A1, NR5A2, NR0B2 and with COPS2. Interacts with ESRRB; represses ESRRB activity at the GATA6 promoter. Expressed in adult cerebral cortex, spinal cord, thymus, heart, lung, ovary, testis, adrenal gland, hypothalamus, spleen and kidney.

The protein localises to the nucleus. Its subcellular location is the cytoplasm. In terms of biological role, nuclear receptor that lacks a DNA-binding domain and acts as a corepressor that inhibits the transcriptional activity of other nuclear receptors through heterodimeric interactions. Component of a cascade required for the development of the hypothalamic-pituitary-adrenal-gonadal axis. May also have a role in the development of the embryo and in the maintenance of embryonic stem cell pluripotency. The chain is Nuclear receptor subfamily 0 group B member 1 (Nr0b1) from Mus musculus (Mouse).